The following is a 91-amino-acid chain: Large ribosomal subunit protein bL27 (91 aa).

The disordered stretch occupies residues methionine 1–glycine 22.

This sequence belongs to the bacterial ribosomal protein bL27 family.

The protein is Large ribosomal subunit protein bL27 of Beijerinckia indica subsp. indica (strain ATCC 9039 / DSM 1715 / NCIMB 8712).